Reading from the N-terminus, the 351-residue chain is uncharacterized protein (351 aa).

The disordered stretch occupies residues 1 to 61 (MNDKRKPSFQ…RDKQEVKETR (61 aa)). Composition is skewed to basic and acidic residues over residues 16 to 38 (FQER…HFND) and 44 to 61 (RNEK…KETR).

This sequence belongs to the class IV-like SAM-binding methyltransferase superfamily. RNA methyltransferase TrmH family.

This is an uncharacterized protein from Haemophilus influenzae (strain ATCC 51907 / DSM 11121 / KW20 / Rd).